The sequence spans 43 residues: Cytochrome b559 subunit beta (43 aa).

Residues 18–34 (WLSVHALGIPTIFFLGA) form a helical membrane-spanning segment. His22 provides a ligand contact to heme.

The protein belongs to the PsbE/PsbF family. Heterodimer of an alpha subunit and a beta subunit. PSII is composed of 1 copy each of membrane proteins PsbA, PsbB, PsbC, PsbD, PsbE, PsbF, PsbH, PsbI, PsbJ, PsbK, PsbL, PsbM, PsbT, PsbX, PsbY, PsbZ, Psb30/Ycf12, at least 3 peripheral proteins of the oxygen-evolving complex and a large number of cofactors. It forms dimeric complexes. The cofactor is heme b.

It localises to the plastid. The protein localises to the chloroplast thylakoid membrane. In terms of biological role, this b-type cytochrome is tightly associated with the reaction center of photosystem II (PSII). PSII is a light-driven water:plastoquinone oxidoreductase that uses light energy to abstract electrons from H(2)O, generating O(2) and a proton gradient subsequently used for ATP formation. It consists of a core antenna complex that captures photons, and an electron transfer chain that converts photonic excitation into a charge separation. In Stigeoclonium helveticum (Green alga), this protein is Cytochrome b559 subunit beta.